Here is a 464-residue protein sequence, read N- to C-terminus: Argininosuccinate lyase (464 aa).

It belongs to the lyase 1 family. Argininosuccinate lyase subfamily.

Its subcellular location is the cytoplasm. It catalyses the reaction 2-(N(omega)-L-arginino)succinate = fumarate + L-arginine. Its pathway is amino-acid biosynthesis; L-arginine biosynthesis; L-arginine from L-ornithine and carbamoyl phosphate: step 3/3. The polypeptide is Argininosuccinate lyase (Pseudomonas fluorescens (strain SBW25)).